Here is a 371-residue protein sequence, read N- to C-terminus: MSGTRAYNILVLPGDGIGPEVMAEAIKVLRTFNSSSMQFHLQEELIGGISIDTHGHSVTQPVKDAAVAADAVLFAAVGGSKVDHIRRGLDGPEGGLLQVRKAMDIYANLRPCSVDVPSREIARDFSPFRQEVIEGVDFVVVRENCGGAYFGKKVEEENYAMDEWGYSTTEIQRIARLAAELALRHDPPWPVISLDKANVLASSRLWRRVVENTISVEYPQVKLVHQLADSASLIMATDPRVLNGVILADNTFGDMLSDQAGSLIGTLGVLPSASLDGLPHPGKQEKVRGLYEPTHGSAPTIAGKNIANPTAMILCVSLMFRYSFNMENEARQIEDAVRAVLDRGLRTPDLGGNSSTQEFGDAVVAALQGKY.

79–93 (GSKVDHIRRGLDGPE) lines the NAD(+) pocket. Positions 100, 110, 142, and 229 each coordinate substrate. Mg(2+)-binding residues include Asp229, Asp254, and Asp258. 296-308 (GSAPTIAGKNIAN) provides a ligand contact to NAD(+).

This sequence belongs to the isocitrate and isopropylmalate dehydrogenases family. Homodimer. It depends on Mg(2+) as a cofactor. Mn(2+) is required as a cofactor.

The protein resides in the cytoplasm. It carries out the reaction (2R,3S)-3-isopropylmalate + NAD(+) = 4-methyl-2-oxopentanoate + CO2 + NADH. It participates in amino-acid biosynthesis; L-leucine biosynthesis; L-leucine from 3-methyl-2-oxobutanoate: step 3/4. Catalyzes the oxidation of 3-carboxy-2-hydroxy-4-methylpentanoate (3-isopropylmalate) to 3-carboxy-4-methyl-2-oxopentanoate. The product decarboxylates to 4-methyl-2 oxopentanoate. This is 3-isopropylmalate dehydrogenase B (leu2B) from Aspergillus niger.